The primary structure comprises 744 residues: Prestin (744 aa).

Topologically, residues 1–75 (MDHAEENEIP…PITKWLPAYK (75 aa)) are cytoplasmic. The helical transmembrane segment at 76 to 105 (FKEYVLGDLVSGISTGVLQLPQGLAFAMLA) threads the bilayer. Over 106–108 (AVP) the chain is Extracellular. Residues 109–126 (PVFGLYSSFYPVIMYCFF) form a helical membrane-spanning segment. Over 127 to 137 (GTSRHISIGPF) the chain is Cytoplasmic. Residues 138–151 (AVISLMIGGVAVRL) form a helical membrane-spanning segment. Topologically, residues 152–168 (VPDDIVIPGGVNATNGT) are extracellular. The Involved in motor function motif lies at 158 to 168 (IPGGVNATNGT). N-linked (GlcNAc...) asparagine glycans are attached at residues Asn163 and Asn166. Residues 169 to 196 (EARDALRVKVAMSVTLLSGIIQFCLGVC) form a helical membrane-spanning segment. The Cytoplasmic segment spans residues 197-206 (RFGFVAIYLT). Residues 207–230 (EPLVRGFTTAAAVHVFTSMLKYLF) form a helical membrane-spanning segment. Residues 231–241 (GVKTKRYSGIF) are Extracellular-facing. Positions 242–253 (SVVYSTVAVLQN) form an intramembrane region, helical. The Extracellular segment spans residues 254-258 (VKNLN). Residues 259-282 (VCSLGVGLMVFGLLLGGKEFNERF) form a helical membrane-spanning segment. Topologically, residues 283–291 (KEKLPAPIP) are cytoplasmic. The helical transmembrane segment at 292 to 307 (LEFFAVVMGTGISAGF) threads the bilayer. Residues 308 to 332 (NLHESYSVDVVGTLPLGLLPPANPD) lie on the Extracellular side of the membrane. The helical transmembrane segment at 333 to 367 (TSLFHLVYVDAIAIAIVGFSVTISMAKTLANKHGY) threads the bilayer. Topologically, residues 368-370 (QVD) are cytoplasmic. The helical transmembrane segment at 371 to 388 (GNQELIALGICNSIGSLF) threads the bilayer. The Extracellular segment spans residues 389–396 (QTFSISCS). Residues 397–406 (LSRSLVQEGT) traverse the membrane as a helical segment. Ser398 provides a ligand contact to salicylate. Residues 407 to 410 (GGKT) are Cytoplasmic-facing. A helical membrane pass occupies residues 411–432 (QLAGCLASLMILLVILATGFLF). Residues 433–436 (ESLP) are Extracellular-facing. A helical membrane pass occupies residues 437 to 464 (QAVLSAIVIVNLKGMFMQFSDLPFFWRT). Ser465 is a topological domain (cytoplasmic). A helical transmembrane segment spans residues 466–481 (KIELTIWLTTFVSSLF). The Extracellular segment spans residues 482 to 483 (LG). A helical membrane pass occupies residues 484-504 (LDYGLITAVIIALLTVIYRTQ). Residues 505 to 718 (SPSYKVLGQL…AVLGSQVREA (214 aa)) form an extended region for STAS domain region. The Cytoplasmic portion of the chain corresponds to 505-744 (SPSYKVLGQL…PNATPTTPEA (240 aa)). The 189-residue stretch at 525–713 (AYEEVKEIPG…HSIHDAVLGS (189 aa)) folds into the STAS domain. The interval 720-744 (AEQEATASLPQEDMEPNATPTTPEA) is disordered.

It belongs to the SLC26A/SulP transporter (TC 2.A.53) family. As to quaternary structure, homodimer. Interacts (via STAS domain) with CALM; this interaction is calcium-dependent and the STAS domain interacts with only one lobe of CALM which is an elongated conformation. Interacts with MYH1. In terms of tissue distribution, expressed in the outer hair cells (OHC) of the organ of Corti of the inner ear. Also weak expression in brain and testis. Very weakly expressed in heart, spleen, muscle and lactating mammary glands. Expressed in cardiac myocytes (at protein level), both in the surface sarcolemma and along the t-tubule. Weakly expressed in skeletal muscle cells (at protein level).

Its subcellular location is the lateral cell membrane. The enzyme catalyses 2 hydrogencarbonate(in) + chloride(out) = 2 hydrogencarbonate(out) + chloride(in). Voltage-sensitive motor protein that drives outer hair cell (OHC) electromotility (eM) and participates in sound amplification in the hearing organ. Converts changes in the transmembrane electric potential into mechanical displacements resulting in the coupling of its expansion to movement of a charged voltage sensor across the lipid membrane. The nature of the voltage sensor is not completely clear, and two models compete. In the first model, acts as an incomplete transporter where intracellular chloride anion acts as extrinsic voltage sensor that drives conformational change in the protein which is sufficient to produce a length change in the plane of the membrane and hence in the length of the OHC. The second model in which multiple charged amino acid residues are distributed at the intracellular and extracellular membrane interfaces that form an intrinsic voltage sensor, whose movement produces the non-linear capacitance (NLC). However, the effective voltage sensor may be the result of a hybrid voltage sensor, assembled from intrinsic charge (charged residues) and extrinsic charge (bound anion). Notably, binding of anions to the anion-binding pocket partially neutralizes the intrinsic positive charge rather than to form an electrically negative sensor, therefore remaining charge may serve as voltage sensor that, after depolarization, moves from down (expanded state) to up (contracted) conformation, which is accompanied by an eccentric contraction of the intermembrane cross-sectional area of the protein as well as a major increase in the hydrophobic thickness of the protein having as consequences the plasma membrane thickening and the cell contraction after membrane depolarization. The anion-binding pocket transits from the inward-open (Down) state, where it is exposed toward the intracellular solvent in the absence of anion, to the occluded (Up) state upon anion binding. Salicylate competes for the anion-binding site and inhibits the voltage-sensor movement, and therefore inhibits the charge transfer and electromotility by displacing Cl(-) from the anion-binding site and by preventing the structural transitions to the contracted state. In addition, can act as a weak Cl(-)/HCO3(-) antiporter across the cell membrane and so regulate the intracellular pH of the outer hair cells (OHCs), while firstly found as being unable to mediate electrogenic anion transport. Moreover, supports a role in cardiac mechanical amplification serving as an elastic element to enhance the actomyosin- based sarcomere contraction system. This Mus musculus (Mouse) protein is Prestin.